Reading from the N-terminus, the 280-residue chain is Putative high affinity immunoglobulin gamma Fc receptor IB (280 aa).

The signal sequence occupies residues 1-15; the sequence is MWFLTTLLLWVPVDG. The Extracellular segment spans residues 16–198; the sequence is QVDTTKAVIT…LQLPTPVWFH (183 aa). Ig-like C2-type domains follow at residues 22 to 101 and 95 to 184; these read AVIT…LEIH and PIQL…ISQY. Intrachain disulfides connect Cys-43-Cys-85 and Cys-124-Cys-168. 3 N-linked (GlcNAc...) asparagine glycosylation sites follow: Asn-59, Asn-152, and Asn-163. The helical transmembrane segment at 199 to 219 threads the bilayer; it reads VLFYLAVGIMFLVNTVLWVTI. Over 220–280 the chain is Cytoplasmic; the sequence is RKELKRKKKW…VHRKEPQGAT (61 aa). The disordered stretch occupies residues 258–280; it reads KCQEQKEEQLQEGVHRKEPQGAT.

This sequence belongs to the immunoglobulin superfamily. FCGR1 family.

The protein resides in the cell membrane. In terms of biological role, may bind to the Fc region of immunoglobulins gamma with a low affinity compared to FCGR1A. May function in the humoral immune response. The protein is Putative high affinity immunoglobulin gamma Fc receptor IB of Homo sapiens (Human).